The primary structure comprises 62 residues: DNA-directed RNA polymerase subunit Rpo10 (62 aa).

Residues cysteine 6, cysteine 9, cysteine 43, and cysteine 44 each coordinate Zn(2+).

This sequence belongs to the archaeal Rpo10/eukaryotic RPB10 RNA polymerase subunit family. In terms of assembly, part of the RNA polymerase complex. Zn(2+) is required as a cofactor.

It localises to the cytoplasm. The catalysed reaction is RNA(n) + a ribonucleoside 5'-triphosphate = RNA(n+1) + diphosphate. Functionally, DNA-dependent RNA polymerase (RNAP) catalyzes the transcription of DNA into RNA using the four ribonucleoside triphosphates as substrates. The protein is DNA-directed RNA polymerase subunit Rpo10 of Methanospirillum hungatei JF-1 (strain ATCC 27890 / DSM 864 / NBRC 100397 / JF-1).